We begin with the raw amino-acid sequence, 533 residues long: DNA primase large subunit (533 aa).

Residues C298, C377, C393, and C433 each contribute to the [4Fe-4S] cluster site. The disordered stretch occupies residues 466–492 (RQKRANGSAPPKARIRPDIKGHGDRSM). Residues 480-490 (IRPDIKGHGDR) show a composition bias toward basic and acidic residues.

It belongs to the eukaryotic-type primase large subunit family. In terms of assembly, heterodimer of a catalytic subunit Prim1 and a regulatory subunit Prim2, also known as the DNA primase complex. Component of the alpha DNA polymerase complex (also known as the alpha DNA polymerase-primase complex) consisting of four subunits: the catalytic subunit PolA1, the regulatory subunit PolA2, and the primase complex subunits Prim1 and Prim2 respectively. PolA1 associates with the DNA primase complex before association with PolA2. Requires [4Fe-4S] cluster as cofactor. As to expression, expressed in embryos (at protein level).

Functionally, regulatory subunit of the DNA primase complex and component of the DNA polymerase alpha complex (also known as the alpha DNA polymerase-primase complex) which play an essential role in the initiation of DNA synthesis. During the S phase of the cell cycle, the DNA polymerase alpha complex (composed of a catalytic subunit PolA1, an accessory subunit PolA2 and two primase subunits, the catalytic subunit Prim1 and the regulatory subunit Prim2) is recruited to DNA at the replicative forks. The primase subunit of the polymerase alpha complex initiates DNA synthesis by oligomerising short RNA primers on both leading and lagging strands. These primers are initially extended by the polymerase alpha catalytic subunit and subsequently transferred to polymerase delta and polymerase epsilon for processive synthesis on the lagging and leading strand, respectively. In the primase complex, both subunits are necessary for the initial di-nucleotide formation, but the extension of the primer depends only on the catalytic subunit. Stabilizes and modulates the activity of the catalytic subunit. This is DNA primase large subunit from Drosophila melanogaster (Fruit fly).